A 393-amino-acid polypeptide reads, in one-letter code: 2,3,4,5-tetrahydropyridine-2,6-dicarboxylate N-succinyltransferase (393 aa).

The active-site Acyl-anhydride intermediate is the E261. Residues R263, G278, S281, A304, 319–320 (DA), G327, K356, and 369–372 (RQDS) contribute to the succinyl-CoA site.

The protein belongs to the type 2 tetrahydrodipicolinate N-succinyltransferase family. As to quaternary structure, homotrimer.

It is found in the cytoplasm. It carries out the reaction (S)-2,3,4,5-tetrahydrodipicolinate + succinyl-CoA + H2O = (S)-2-succinylamino-6-oxoheptanedioate + CoA. Its pathway is amino-acid biosynthesis; L-lysine biosynthesis via DAP pathway; LL-2,6-diaminopimelate from (S)-tetrahydrodipicolinate (succinylase route): step 1/3. Catalyzes the conversion of the cyclic tetrahydrodipicolinate (THDP) into the acyclic N-succinyl-L-2-amino-6-oxopimelate using succinyl-CoA. The sequence is that of 2,3,4,5-tetrahydropyridine-2,6-dicarboxylate N-succinyltransferase from Nitratiruptor sp. (strain SB155-2).